Reading from the N-terminus, the 51-residue chain is Small integral membrane protein 38 (51 aa).

The chain crosses the membrane as a helical span at residues Pro13–Gly33.

Its subcellular location is the membrane. The chain is Small integral membrane protein 38 from Homo sapiens (Human).